Consider the following 507-residue polypeptide: Probable Xaa-Pro aminopeptidase HCAG_02413 (507 aa).

Asp283, Asp294, Glu431, and Glu469 together coordinate Mn(2+).

Belongs to the peptidase M24B family. Requires Mn(2+) as cofactor.

The catalysed reaction is Release of any N-terminal amino acid, including proline, that is linked to proline, even from a dipeptide or tripeptide.. Its function is as follows. Catalyzes the removal of a penultimate prolyl residue from the N-termini of peptides. The sequence is that of Probable Xaa-Pro aminopeptidase HCAG_02413 from Ajellomyces capsulatus (strain NAm1 / WU24) (Darling's disease fungus).